The primary structure comprises 275 residues: Fos-related antigen 1 (275 aa).

Disordered regions lie at residues 1–33 and 71–115; these read MYRDFGEPGPSSGAGSAYGRPAQPQQAQTQTVQ and TYPQ…VRRE. The span at 7–33 shows a compositional bias: low complexity; the sequence is EPGPSSGAGSAYGRPAQPQQAQTQTVQ. A bZIP domain is found at 107–170; it reads EERRRVRRER…ERLELVLEAH (64 aa). Residues 109–129 are basic motif; that stretch reads RRRVRRERNKLAAAKCRNRRK. A leucine-zipper region spans residues 135-163; sequence LQAETDKLEDEKSGLQREIEELQKQKERL. Basic and acidic residues predominate over residues 171-184; that stretch reads RPICKIPEEDKKDT. The segment at 171–275 is disordered; that stretch reads RPICKIPEED…PLGSPTLLAL (105 aa). Composition is skewed to low complexity over residues 185-194, 219-237, and 256-275; these read GGTSSTSGAG, LHTPTLMTTPSLTPFTPSL, and SSSSGDPSSDPLGSPTLLAL. A Phosphoserine modification is found at Ser-269.

It belongs to the bZIP family. Fos subfamily. Heterodimer. Interacts with the BAF multiprotein chromatin-remodeling complex subunits SMARCB1 and SMARCD1. Interacts with ARID1A and JUN.

It is found in the nucleus. The protein is Fos-related antigen 1 (Fosl1) of Rattus norvegicus (Rat).